The sequence spans 488 residues: Protein nucleotidyltransferase YdiU (488 aa).

Gly91, Gly93, Arg94, Lys114, Asp126, Gly127, Arg177, and Arg184 together coordinate ATP. Residues 108 to 127 (RFDIQLKGSGPTPYSRRGDG) form a disordered region. Asp253 functions as the Proton acceptor in the catalytic mechanism. The Mg(2+) site is built by Asn254 and Asp263. Residue Asp263 coordinates ATP.

This sequence belongs to the SELO family. It depends on Mg(2+) as a cofactor. The cofactor is Mn(2+).

The enzyme catalyses L-seryl-[protein] + ATP = 3-O-(5'-adenylyl)-L-seryl-[protein] + diphosphate. The catalysed reaction is L-threonyl-[protein] + ATP = 3-O-(5'-adenylyl)-L-threonyl-[protein] + diphosphate. It catalyses the reaction L-tyrosyl-[protein] + ATP = O-(5'-adenylyl)-L-tyrosyl-[protein] + diphosphate. It carries out the reaction L-histidyl-[protein] + UTP = N(tele)-(5'-uridylyl)-L-histidyl-[protein] + diphosphate. The enzyme catalyses L-seryl-[protein] + UTP = O-(5'-uridylyl)-L-seryl-[protein] + diphosphate. The catalysed reaction is L-tyrosyl-[protein] + UTP = O-(5'-uridylyl)-L-tyrosyl-[protein] + diphosphate. In terms of biological role, nucleotidyltransferase involved in the post-translational modification of proteins. It can catalyze the addition of adenosine monophosphate (AMP) or uridine monophosphate (UMP) to a protein, resulting in modifications known as AMPylation and UMPylation. This chain is Protein nucleotidyltransferase YdiU, found in Bacillus anthracis (strain A0248).